The chain runs to 236 residues: Geranylgeranylglyceryl phosphate synthase (236 aa).

A sn-glycerol 1-phosphate-binding site is contributed by lysine 13. Residues aspartate 15 and threonine 42 each coordinate Mg(2+). Sn-glycerol 1-phosphate-binding positions include 161 to 166 (YVEYSG), glycine 191, and 211 to 212 (GD).

The protein belongs to the GGGP/HepGP synthase family. Group I subfamily. The cofactor is Mg(2+).

It localises to the cytoplasm. The catalysed reaction is sn-glycerol 1-phosphate + (2E,6E,10E)-geranylgeranyl diphosphate = sn-3-O-(geranylgeranyl)glycerol 1-phosphate + diphosphate. Its pathway is membrane lipid metabolism; glycerophospholipid metabolism. Functionally, prenyltransferase that catalyzes the transfer of the geranylgeranyl moiety of geranylgeranyl diphosphate (GGPP) to the C3 hydroxyl of sn-glycerol-1-phosphate (G1P). This reaction is the first ether-bond-formation step in the biosynthesis of archaeal membrane lipids. The polypeptide is Geranylgeranylglyceryl phosphate synthase (Halobacterium salinarum (strain ATCC 700922 / JCM 11081 / NRC-1) (Halobacterium halobium)).